The primary structure comprises 700 residues: Elongation factor G (700 aa).

One can recognise a tr-type G domain in the interval 10 to 285 (DRTRNIGIMA…AVIDYLPSPL (276 aa)). Residues 19–26 (AHIDAGKT), 83–87 (DTPGH), and 137–140 (NKMD) contribute to the GTP site.

The protein belongs to the TRAFAC class translation factor GTPase superfamily. Classic translation factor GTPase family. EF-G/EF-2 subfamily.

The protein localises to the cytoplasm. In terms of biological role, catalyzes the GTP-dependent ribosomal translocation step during translation elongation. During this step, the ribosome changes from the pre-translocational (PRE) to the post-translocational (POST) state as the newly formed A-site-bound peptidyl-tRNA and P-site-bound deacylated tRNA move to the P and E sites, respectively. Catalyzes the coordinated movement of the two tRNA molecules, the mRNA and conformational changes in the ribosome. The polypeptide is Elongation factor G (Lacticaseibacillus paracasei (strain ATCC 334 / BCRC 17002 / CCUG 31169 / CIP 107868 / KCTC 3260 / NRRL B-441) (Lactobacillus paracasei)).